The primary structure comprises 370 residues: Actin-related protein 2/3 complex subunit 1A (370 aa).

6 WD repeats span residues 6–45 (FLLEPITCHAWNRDRTQIALSPNNHEVHIYKKNGSQWTKA), 50–89 (EHNGHITGIDWAPKSDRIVTCGADRNAYVWSQKDGIWKPT), 140–179 (PIRSTVLSLDWHPNNVLLAAGSCDFKCRVFSAYIKEVDEK), 202–241 (GTGGWVHGVSFSASGSRLAWVSHDSTVSVADASKSVQVST), 244–284 (TEFL…TFVS), and 322–365 (LHQN…SSIQ).

This sequence belongs to the WD repeat ARPC1 family. In terms of assembly, probable component of the Arp2/3 complex in which it may replace ARPC1B.

The protein resides in the cytoplasm. It localises to the cytoskeleton. It is found in the nucleus. Functionally, probably functions as a component of the Arp2/3 complex which is involved in regulation of actin polymerization and together with an activating nucleation-promoting factor (NPF) mediates the formation of branched actin networks. In addition to its role in the cytoplasmic cytoskeleton, the Arp2/3 complex also promotes actin polymerization in the nucleus, thereby regulating gene transcription and repair of damaged DNA. This chain is Actin-related protein 2/3 complex subunit 1A (Arpc1a), found in Rattus norvegicus (Rat).